The following is a 280-amino-acid chain: 3-methyl-2-oxobutanoate hydroxymethyltransferase (280 aa).

Mg(2+) contacts are provided by D61 and D100. Residues 61–62, D100, and K130 contribute to the 3-methyl-2-oxobutanoate site; that span reads DS. Residue E132 participates in Mg(2+) binding. E198 functions as the Proton acceptor in the catalytic mechanism.

This sequence belongs to the PanB family. Homodecamer; pentamer of dimers. Requires Mg(2+) as cofactor.

The protein resides in the cytoplasm. It catalyses the reaction 3-methyl-2-oxobutanoate + (6R)-5,10-methylene-5,6,7,8-tetrahydrofolate + H2O = 2-dehydropantoate + (6S)-5,6,7,8-tetrahydrofolate. It functions in the pathway cofactor biosynthesis; (R)-pantothenate biosynthesis; (R)-pantoate from 3-methyl-2-oxobutanoate: step 1/2. Its function is as follows. Catalyzes the reversible reaction in which hydroxymethyl group from 5,10-methylenetetrahydrofolate is transferred onto alpha-ketoisovalerate to form ketopantoate. This chain is 3-methyl-2-oxobutanoate hydroxymethyltransferase, found in Mycolicibacterium vanbaalenii (strain DSM 7251 / JCM 13017 / BCRC 16820 / KCTC 9966 / NRRL B-24157 / PYR-1) (Mycobacterium vanbaalenii).